Here is a 754-residue protein sequence, read N- to C-terminus: MTTAGRGNLGLIPRSTAFQKQEGRLTVKQEPANQTWGQGSSLQKNYPPVCEIFRLHFRQLCYHEMSGPQEALSRLRELCRWWLMPEVHTKEQILELLVLEQFLSILPGELRTWVQLHHPESGEEAVAVVEDFQRHLSGSEEVSAPAQKQEMHFEETTALGTTKESPPTSPLSGGSAPGAHLEPPYDPGTHHLPSGDFAQCTSPVPTLPQVGNSGDQAGATVLRMVRPQDTVAYEDLSVDYTQKKWKSLTLSQRALQWNMMPENHHSMASLAGENMMKGSELTPKQEFFKGSESSNRTSGGLFGVVPGAAETGDVCEDTFKELEGQTSDEEGSRLENDFLEITDEDKKKSTKDRYDKYKEVGEHPPLSSSPVEHEGVLKGQKSYRCDECGKAFNRSSHLIGHQRIHTGEKPYECNECGKTFRQTSQLIVHLRTHTGEKPYECSECGKAYRHSSHLIQHQRLHNGEKPYKCNECAKAFTQSSRLTDHQRTHTGEKPYECNECGEAFIRSKSLARHQVLHTGKKPYKCNECGRAFCSNRNLIDHQRIHTGEKPYECSECGKAFSRSKCLIRHQSLHTGEKPYKCSECGKAFNQNSQLIEHERIHTGEKPFECSECGKAFGLSKCLIRHQRLHTGEKPYKCNECGKSFNQNSHLIIHQRIHTGEKPYECNECGKVFSYSSSLMVHQRTHTGEKPYKCNDCGKAFSDSSQLIVHQRVHTGEKPYECSECGKAFSQRSTFNHHQRTHTGEKSSGLAWSVS.

A Glycyl lysine isopeptide (Lys-Gly) (interchain with G-Cter in SUMO2) cross-link involves residue K28. The SCAN box domain maps to 54-136 (RLHFRQLCYH…AVVEDFQRHL (83 aa)). The disordered stretch occupies residues 157-215 (TALGTTKESPPTSPLSGGSAPGAHLEPPYDPGTHHLPSGDFAQCTSPVPTLPQVGNSGD). 2 stretches are compositionally biased toward polar residues: residues 158–172 (ALGT…SPLS) and 199–215 (QCTS…NSGD). One can recognise a KRAB domain in the interval 231–306 (VAYEDLSVDY…TSGGLFGVVP (76 aa)). C2H2-type zinc fingers lie at residues 383–405 (YRCD…QRIH), 411–433 (YECN…LRTH), 439–461 (YECS…QRLH), 467–489 (YKCN…QRTH), 495–517 (YECN…QVLH), 523–545 (YKCN…QRIH), 551–573 (YECS…QSLH), 579–601 (YKCS…ERIH), 607–629 (FECS…QRLH), and 635–657 (YKCN…QRIH). A C2H2-type 11; degenerate zinc finger spans residues 663 to 685 (YECNECGKVFSYSSSLMVHQRTH). 2 C2H2-type zinc fingers span residues 691–713 (YKCN…QRVH) and 719–741 (YECS…QRTH). Residues 735–754 (NHHQRTHTGEKSSGLAWSVS) form a disordered region.

The protein belongs to the krueppel C2H2-type zinc-finger protein family.

Its subcellular location is the nucleus. May be involved in transcriptional regulation. The polypeptide is Zinc finger protein with KRAB and SCAN domains 7 (ZKSCAN7) (Homo sapiens (Human)).